A 1154-amino-acid polypeptide reads, in one-letter code: DNA-directed RNA polymerase, mitochondrial (1154 aa).

The N-terminal 30 residues, 1-30 (MLRRKIQTYLSRSHIRRGLCGLRFFQTQRL), are a transit peptide targeting the mitochondrion. Residues 221–243 (ESENGKDQNGDSSLKEKQPDVET) are disordered. Positions 223–240 (ENGKDQNGDSSLKEKQPD) are enriched in basic and acidic residues. Residues Asp821, Lys890, and Asp1061 contribute to the active site.

This sequence belongs to the phage and mitochondrial RNA polymerase family.

It localises to the mitochondrion. It catalyses the reaction RNA(n) + a ribonucleoside 5'-triphosphate = RNA(n+1) + diphosphate. In terms of biological role, DNA-dependent RNA polymerase catalyzes the transcription of DNA into RNA using the four ribonucleoside triphosphates as substrates. Combines in the mitochondrion with mitochondrial transcription factor mtf1 as a holoenzyme to recognize and initiate transcription at the core mitochondrial promoters. This Schizosaccharomyces pombe (strain 972 / ATCC 24843) (Fission yeast) protein is DNA-directed RNA polymerase, mitochondrial (rpo41).